We begin with the raw amino-acid sequence, 249 residues long: Secreted flagellin C (249 aa).

Interacts with FliS.

Its subcellular location is the secreted. Might play a role in virulence. This Campylobacter jejuni subsp. jejuni serotype O:6 (strain 81116 / NCTC 11828) protein is Secreted flagellin C (flaC).